The following is a 35-amino-acid chain: PTEN upstream open reading frame MP31 (35 aa).

In terms of assembly, interacts with lactate dehydrogenases LDHA and LDHB; interaction with mitochondrial LDH leads to inhibition of lactate dehydrogenase activity, preventing conversion of lactate to pyruvate. In terms of tissue distribution, detected in brain, kidney and liver (at protein level).

It localises to the mitochondrion. Functionally, inhibits lactate dehydrogenase (LDH)-mediated conversion of lactate to pyruvate in mitochondria by competing with mitochondrial LDH for binding to NAD(+). Also inhibits cellular lactate utilization. This is PTEN upstream open reading frame MP31 from Mus musculus (Mouse).